Consider the following 93-residue polypeptide: Large ribosomal subunit protein bL27 (93 aa).

A propeptide spanning residues 1-8 is cleaved from the precursor; that stretch reads MIMDLQFF. The segment at 8–29 is disordered; the sequence is FSHHKGGGSTANGRNSAGRRLG.

This sequence belongs to the bacterial ribosomal protein bL27 family. Post-translationally, the N-terminus is cleaved by ribosomal processing cysteine protease Prp.

The sequence is that of Large ribosomal subunit protein bL27 from Limosilactobacillus fermentum (strain NBRC 3956 / LMG 18251) (Lactobacillus fermentum).